Reading from the N-terminus, the 156-residue chain is Small ribosomal subunit protein uS7 (156 aa).

It belongs to the universal ribosomal protein uS7 family. As to quaternary structure, part of the 30S ribosomal subunit. Contacts proteins S9 and S11.

In terms of biological role, one of the primary rRNA binding proteins, it binds directly to 16S rRNA where it nucleates assembly of the head domain of the 30S subunit. Is located at the subunit interface close to the decoding center, probably blocks exit of the E-site tRNA. The polypeptide is Small ribosomal subunit protein uS7 (Campylobacter fetus subsp. fetus (strain 82-40)).